Reading from the N-terminus, the 188-residue chain is Abscisic acid receptor PYL8 (188 aa).

The segment at 25-176 is START-like; the sequence is HELVDNQCSS…NLKSLADISE (152 aa). Residues Cys-32 and Cys-157 are joined by a disulfide bond. Lys-61 provides a ligand contact to abscisate. Thr-77 is modified (phosphothreonine; by CARK1). The Gate loop motif lies at 85–89; the sequence is SGLPA. Abscisate is bound by residues 89-94, 116-122, and Glu-141; these read ATRSTE and RLKNYSS. The short motif at 115–117 is the Latch loop element; that stretch reads HRL.

The protein belongs to the PYR/PYL/RCAR abscisic acid intracellular receptor family. Monomer. Homodimer. Binds ABA on one subunit only. interacts with ABI1 and HAB1, and possibly with other PP2Cs. Binds to CARs protein in an ABA-independent manner, both at the plasma membrane and in the nucleus. Interacts directly with CAR1 and CAR4. Interacts with MYB44, MYB73 and MYB77 in an ABA-independent manner. Interacts with DDA1. Interacts with CARK1 in the cytosol. Binds to ABI1 when phosphorylated by CARK1. Interacts with AIP1 in the nucleus. In terms of processing, phosphorylated by CARK1 especially in response to abscisic acid (ABA); this phosphorylation promotes its stability and inhibitory ability to ABI1. Post-translationally, ubiquitinated in DDA1- and CDD complex-dependent manner. Ubiquitination leads to its subsequent proteasomal degradation.

The protein localises to the cytoplasm. It is found in the cytosol. It localises to the nucleus. The protein resides in the cell membrane. Functionally, receptor for abscisic acid (ABA) required for ABA-mediated responses such as stomatal closure and germination inhibition. Inhibits the activity of group-A protein phosphatases type 2C (PP2Cs) in an ABA-independent manner but more efficiently when activated by ABA. Confers enhanced sensitivity to ABA. Can be activated by both (-)-ABA and (+)-ABA. Mediates crosstalk between ABA and auxin signaling to regulate lateral root growth. Required for lateral root growth suppression by ABA. In response to auxin, promotes lateral root growth by enhancing MYB77-dependent transcription of the auxin-responsive gene IAA19. Enhances the abilities of MYB44 and MYB73 to activate IAA19 gene. The protein is Abscisic acid receptor PYL8 of Arabidopsis thaliana (Mouse-ear cress).